A 189-amino-acid chain; its full sequence is Peptidyl-tRNA hydrolase (189 aa).

Tyr15 contacts tRNA. His20 acts as the Proton acceptor in catalysis. 3 residues coordinate tRNA: Phe66, Asn68, and Asn114.

Belongs to the PTH family. As to quaternary structure, monomer.

Its subcellular location is the cytoplasm. It carries out the reaction an N-acyl-L-alpha-aminoacyl-tRNA + H2O = an N-acyl-L-amino acid + a tRNA + H(+). Functionally, hydrolyzes ribosome-free peptidyl-tRNAs (with 1 or more amino acids incorporated), which drop off the ribosome during protein synthesis, or as a result of ribosome stalling. In terms of biological role, catalyzes the release of premature peptidyl moieties from peptidyl-tRNA molecules trapped in stalled 50S ribosomal subunits, and thus maintains levels of free tRNAs and 50S ribosomes. In Streptococcus gordonii (strain Challis / ATCC 35105 / BCRC 15272 / CH1 / DL1 / V288), this protein is Peptidyl-tRNA hydrolase.